Reading from the N-terminus, the 290-residue chain is MKRTPHLLAIQSHVVFGHAGNSAAVFPMQRVGVNVWPLNTVQFSNHTQYGQWAGEVLAPAQIPALVEGISNIGELGNCDAVLSGYLGSAEQGRAILAGVARIKAVNPKALYLCDPVMGHAEKGCIVPAEVSEFLLEEAVAKADILCPNQLELDSFCGRRAESLEDCVGMARGLLERGPRIVLVKHLNYPGRADDAFEMLLVTGEESWHLRRPLLAFPRQPVGVGDLTSGLFMARLLLGDSDVQAFEFAAAAVHEVLLETQACASYELQLVRAQDRIAHPRVRFEAQRLLY.

Residues S12 and 47 to 48 contribute to the substrate site; that span reads TQ. Residues D114, E151, K184, and 211–214 each bind ATP; that span reads RPLL. D225 serves as a coordination point for substrate.

The protein belongs to the pyridoxine kinase family. PdxY subfamily. As to quaternary structure, homodimer. Mg(2+) serves as cofactor.

It catalyses the reaction pyridoxal + ATP = pyridoxal 5'-phosphate + ADP + H(+). It functions in the pathway cofactor metabolism; pyridoxal 5'-phosphate salvage; pyridoxal 5'-phosphate from pyridoxal: step 1/1. In terms of biological role, pyridoxal kinase involved in the salvage pathway of pyridoxal 5'-phosphate (PLP). Catalyzes the phosphorylation of pyridoxal to PLP. The polypeptide is Pyridoxal kinase PdxY (Pseudomonas entomophila (strain L48)).